The chain runs to 56 residues: Cytochrome b-c1 complex subunit 10 (56 aa).

Residues 1 to 12 (MVTRFLGPRYRE) are Mitochondrial matrix-facing. The helical transmembrane segment at 13–35 (LVKNWVPTAYTWGAVGAVGLVWA) threads the bilayer. Topologically, residues 36–56 (TDWRLILDWVPYINGKFKKDN) are mitochondrial intermembrane.

This sequence belongs to the UQCR11/QCR10 family. In terms of assembly, component of the ubiquinol-cytochrome c oxidoreductase (cytochrome b-c1 complex, complex III, CIII), a multisubunit enzyme composed of 11 subunits. The complex is composed of 3 respiratory subunits cytochrome b, cytochrome c1 and Rieske protein UQCRFS1, 2 core protein subunits UQCRC1/QCR1 and UQCRC2/QCR2, and 6 low-molecular weight protein subunits UQCRH/QCR6, UQCRB/QCR7, UQCRQ/QCR8, UQCR10/QCR9, UQCR11/QCR10 and subunit 9, the cleavage product of Rieske protein UQCRFS1. The complex exists as an obligatory dimer and forms supercomplexes (SCs) in the inner mitochondrial membrane with NADH-ubiquinone oxidoreductase (complex I, CI) and cytochrome c oxidase (complex IV, CIV), resulting in different assemblies (supercomplex SCI(1)III(2)IV(1) and megacomplex MCI(2)III(2)IV(2)).

Its subcellular location is the mitochondrion inner membrane. Its function is as follows. Component of the ubiquinol-cytochrome c oxidoreductase, a multisubunit transmembrane complex that is part of the mitochondrial electron transport chain which drives oxidative phosphorylation. The respiratory chain contains 3 multisubunit complexes succinate dehydrogenase (complex II, CII), ubiquinol-cytochrome c oxidoreductase (cytochrome b-c1 complex, complex III, CIII) and cytochrome c oxidase (complex IV, CIV), that cooperate to transfer electrons derived from NADH and succinate to molecular oxygen, creating an electrochemical gradient over the inner membrane that drives transmembrane transport and the ATP synthase. The cytochrome b-c1 complex catalyzes electron transfer from ubiquinol to cytochrome c, linking this redox reaction to translocation of protons across the mitochondrial inner membrane, with protons being carried across the membrane as hydrogens on the quinol. In the process called Q cycle, 2 protons are consumed from the matrix, 4 protons are released into the intermembrane space and 2 electrons are passed to cytochrome c. QCR10 has a role in CIII assembly and RIP1 stability. The chain is Cytochrome b-c1 complex subunit 10 (UQCR11) from Homo sapiens (Human).